Reading from the N-terminus, the 341-residue chain is Adenine deaminase (341 aa).

Positions 17, 19, and 197 each coordinate Zn(2+). Glutamate 200 serves as the catalytic Proton donor. Aspartate 278 is a binding site for Zn(2+). Aspartate 279 contributes to the substrate binding site.

This sequence belongs to the metallo-dependent hydrolases superfamily. Adenosine and AMP deaminases family. Adenine deaminase type 2 subfamily. Zn(2+) serves as cofactor.

The enzyme catalyses adenine + H2O + H(+) = hypoxanthine + NH4(+). In terms of biological role, catalyzes the hydrolytic deamination of adenine to hypoxanthine. Plays an important role in the purine salvage pathway and in nitrogen catabolism. This Chlorobium luteolum (strain DSM 273 / BCRC 81028 / 2530) (Pelodictyon luteolum) protein is Adenine deaminase.